Consider the following 393-residue polypeptide: Acyltransferase ato1 (393 aa).

It belongs to the lysine N-acyltransferase mbtK family.

The protein operates within siderophore biosynthesis; ferrichrome biosynthesis. Functionally, L-ornithine N(5)-monooxygenase; part of the siderophore biosynthetic pathway. Omphalotus olearius produces ferrichrome A, but no other siderophore has been detected. Ferrichrome A consists of a hexapeptide ring made up of one glycine, two serine, and three N(5)-hydroxyornithine amino acid residues, the latter acylated by trans-(alpha-methyl)-glutaconic acid residues. The biosynthesis of ferrichrome A depends on the hydroxylation of ornithine to N(5)-hydroxyornithine, catalyzed by the monooxygenase omo1. The second step, the acylation of N(5)-hydroxy-L-ornithine is probably catalyzed by the N-acyltransferase ato1. Finally, assembly of ferrichrome A is catalyzed by the nonribosomal peptide synthase (NRPS) fso1. This Omphalotus olearius (Jack o'lantern) protein is Acyltransferase ato1.